Reading from the N-terminus, the 350-residue chain is Outer membrane protein A (350 aa).

The N-terminal stretch at 1 to 21 (MKKTAIAIAVALAGFATVAQA) is a signal peptide. 8 consecutive transmembrane segments (beta stranded) span residues 27–37 (TWYAGAKLGWS), 55–66 (QLGAGAFGGYQV), 70–78 (VGFEMGYDW), 96–107 (QGVQLTAKLGYP), 112–120 (LDVYTRLGG), 146–155 (PVFAGGIEYA), 160–167 (IATRLEYQ), and 186–194 (LLSVGVSYR). 4 repeat units span residues 205–206 (AP), 207–208 (AP), 209–210 (AP), and 211–212 (AP). The 4 X 2 AA tandem repeats of A-P stretch occupies residues 205–212 (APAPAPAP). An OmpA-like domain is found at 214-342 (VQTKHFTLKS…RVEIEVKGVK (129 aa)). The cysteines at positions 315 and 327 are disulfide-linked.

Belongs to the outer membrane OOP (TC 1.B.6) superfamily. OmpA family. In terms of assembly, monomer and homodimer.

It is found in the cell outer membrane. With TolR probably plays a role in maintaining the position of the peptidoglycan cell wall in the periplasm. Acts as a porin with low permeability that allows slow penetration of small solutes; an internal gate slows down solute passage. Its function is as follows. Required for conjugation with F-type plasmids; probably serves as the mating receptor on recipient cells. This is Outer membrane protein A from Salmonella typhi.